Consider the following 238-residue polypeptide: Protein shisa-3 homolog (238 aa).

Residues 1–21 form the signal peptide; the sequence is MGALLAFCLLVGLLRWGPAGA. The Lumenal segment spans residues 22-98; sequence QQPGEYCHGW…GITAQPVYVP (77 aa). The helical transmembrane segment at 99–119 threads the bilayer; the sequence is FLIVGSIFIAFIILGSLVAIY. Over 120–238 the chain is Cytoplasmic; that stretch reads CCTCLRPKEP…GKSCPDFSSS (119 aa).

The protein belongs to the shisa family.

The protein localises to the endoplasmic reticulum membrane. Functionally, plays an essential role in the maturation of presomitic mesoderm cells by individual attenuation of both FGF and WNT signaling. This Mus musculus (Mouse) protein is Protein shisa-3 homolog (Shisa3).